Here is a 1215-residue protein sequence, read N- to C-terminus: MKQPIMADGPRCKRRKQANPRRKNVVNYDNVVDAGSETDEEDKLHIAEDDSLANPLDQDTSPASMPNHESSPHMSQGLLPREEEEEELRESVVEHSWHSGEILQASVAGPEEMKEDYDAMGPEATIQTTINNGTVKNANCTSDFEEYFAKRKLEERDGHAVSIEEYLQRSDTAIIYPEAPEELSRLGTPEANGQEENDLPPGTPDAFAQLLTCPYCDRGYKRLTSLKEHIKYRHEKNEENFSCPLCSYTFAYRTQLERHMVTHKPGTDQHQMLTQGAGNRKFKCTECGKAFKYKHHLKEHLRIHSGEKPYECPNCKKRFSHSGSYSSHISSKKCIGLISVNGRMRNNIKTGSSPNSVSSSPTNSAITQLRNKLENGKPLSMSEQTGLLKIKTEPLDFNDYKVLMATHGFSGSSPFMNGGLGATSPLGVHPSAQSPMQHLGVGMEAPLLGFPTMNSNLSEVQKVLQIVDNTVSRQKMDCKTEDISKLKGYHMKDPCSQPEEQGVTSPNIPPVGLPVVSHNGATKSIIDYTLEKVNEAKACLQSLTTDSRRQISNIKKEKLRTLIDLVTDDKMIENHSISTPFSCQFCKESFPGPIPLHQHERYLCKMNEEIKAVLQPHENIVPNKAGVFVDNKALLLSSVLSEKGLTSPINPYKDHMSVLKAYYAMNMEPNSDELLKISIAVGLPQEFVKEWFEQRKVYQYSNSRSPSLERTSKPLAPNSNPTTKDSLLPRSPVKPMDSITSPSIAELHNSVTSCDPPLRLTKSSHFTNIKAVDKLDHSRSNTPSPLNLSSTSSKNSHSSSYTPNSFSSEELQAEPLDLSLPKQMREPKGIIATKNKTKATSINLDHNSVSSSSENSDEPLNLTFIKKEFSNSNNLDNKSNNPVFGMNPFSAKPLYTPLPPQSAFPPATFMPPVQTSIPGLRPYPGLDQMSFLPHMAYTYPTGAATFADMQQRRKYQRKQGFQGDLLDGAQDYMSGLDDMTDSDSCLSRKKIKKTESGMYACDLCDKTFQKSSSLLRHKYEHTGKRPHQCQICKKAFKHKHHLIEHSRLHSGEKPYQCDKCGKRFSHSGSYSQHMNHRYSYCKREAEEREAAEREAREKGHLEPTELLMNRAYLQSITPQGYSDSEERESMPRDGESEKEHEKEGEEGYGKLRRRDGDEEEEEEEEESENKSMDTDPETIRDEEETGDHSMDDSSEDGKMETKSDHEEDNMEDGME.

A disordered region spans residues 1 to 111 (MKQPIMADGP…ILQASVAGPE (111 aa)). Basic residues predominate over residues 12–24 (CKRRKQANPRRKN). The span at 57–74 (DQDTSPASMPNHESSPHM) shows a compositional bias: polar residues. Residues 89–98 (RESVVEHSWH) show a composition bias toward basic and acidic residues. Residue serine 142 is modified to Phosphoserine. C2H2-type zinc fingers lie at residues 211–234 (LTCP…KYRH), 241–263 (FSCP…MVTH), and 282–304 (FKCT…LRIH). The C2H2-type 4; atypical zinc-finger motif lies at 310 to 334 (YECPNCKKRFSHSGSYSSHISSKKC). 3 positions are modified to phosphoserine: serine 356, serine 360, and serine 364. Lysine 377 carries the post-translational modification N6-acetyllysine. Lysine 391 participates in a covalent cross-link: Glycyl lysine isopeptide (Lys-Gly) (interchain with G-Cter in SUMO); alternate. A Glycyl lysine isopeptide (Lys-Gly) (interchain with G-Cter in SUMO2); alternate cross-link involves residue lysine 391. Positions 437 to 487 (QHLGVGMEAPLLGFPTMNSNLSEVQKVLQIVDNTVSRQKMDCKTEDISKLK) are SMAD-MH2 binding domain. Residues lysine 479 and lysine 555 each participate in a glycyl lysine isopeptide (Lys-Gly) (interchain with G-Cter in SUMO2) cross-link. The C2H2-type 5; degenerate zinc-finger motif lies at 581 to 605 (FSCQFCKESFPGPIPLHQHERYLCK). Residues lysine 611 and lysine 632 each participate in a glycyl lysine isopeptide (Lys-Gly) (interchain with G-Cter in SUMO2) cross-link. The segment at residues 644-703 (GLTSPINPYKDHMSVLKAYYAMNMEPNSDELLKISIAVGLPQEFVKEWFEQRKVYQYSNS) is a DNA-binding region (homeobox; atypical). The residue at position 647 (serine 647) is a Phosphoserine. Disordered regions lie at residues 702 to 740 (NSRS…DSIT) and 772 to 811 (VDKL…SEEL). Lysine 713 participates in a covalent cross-link: Glycyl lysine isopeptide (Lys-Gly) (interchain with G-Cter in SUMO2). Residues serine 731 and serine 780 each carry the phosphoserine modification. Positions 780–808 (SNTPSPLNLSSTSSKNSHSSSYTPNSFSS) are enriched in low complexity. Threonine 782 carries the phosphothreonine modification. Serine 784 is subject to Phosphoserine. Residue lysine 866 forms a Glycyl lysine isopeptide (Lys-Gly) (interchain with G-Cter in SUMO); alternate linkage. Lysine 866 is covalently cross-linked (Glycyl lysine isopeptide (Lys-Gly) (interchain with G-Cter in SUMO2); alternate). 2 C2H2-type zinc fingers span residues 999–1021 (YACD…KYEH) and 1027–1049 (HQCQ…SRLH). A C2H2-type 8; atypical zinc finger spans residues 1055–1076 (YQCDKCGKRFSHSGSYSQHMNH). The tract at residues 1117 to 1215 (TPQGYSDSEE…EEDNMEDGME (99 aa)) is disordered. A phosphoserine mark is found at serine 1122 and serine 1124. Positions 1127-1149 (RESMPRDGESEKEHEKEGEEGYG) are enriched in basic and acidic residues. Residues 1157-1167 (DEEEEEEEEES) show a composition bias toward acidic residues. Basic and acidic residues-rich tracts occupy residues 1168-1179 (ENKSMDTDPETI) and 1186-1205 (GDHS…KSDH). Serine 1203 is subject to Phosphoserine. The span at 1206-1215 (EEDNMEDGME) shows a compositional bias: acidic residues.

It belongs to the delta-EF1/ZFH-1 C2H2-type zinc-finger family. Interacts with CBX4 and CTBP1. Binds activated SMAD1, activated SMAD2 and activated SMAD3; binding with SMAD4 is not detected. Sumoylation on Lys-391 and Lys-866 is promoted by the E3 SUMO-protein ligase CBX4, and impairs interaction with CTBP1 and transcription repression activity.

The protein resides in the nucleus. It is found in the chromosome. Functionally, transcriptional inhibitor that binds to DNA sequence 5'-CACCT-3' in different promoters. Represses transcription of E-cadherin. Represses expression of MEOX2. The polypeptide is Zinc finger E-box-binding homeobox 2 (Zeb2) (Mus musculus (Mouse)).